The primary structure comprises 248 residues: 23S rRNA (guanosine-2'-O-)-methyltransferase RlmB (248 aa).

S-adenosyl-L-methionine-binding residues include Gly200, Ile220, and Leu229.

The protein belongs to the class IV-like SAM-binding methyltransferase superfamily. RNA methyltransferase TrmH family. RlmB subfamily.

The protein resides in the cytoplasm. The catalysed reaction is guanosine(2251) in 23S rRNA + S-adenosyl-L-methionine = 2'-O-methylguanosine(2251) in 23S rRNA + S-adenosyl-L-homocysteine + H(+). Specifically methylates the ribose of guanosine 2251 in 23S rRNA. The protein is 23S rRNA (guanosine-2'-O-)-methyltransferase RlmB of Acinetobacter baylyi (strain ATCC 33305 / BD413 / ADP1).